Here is a 236-residue protein sequence, read N- to C-terminus: MGQKVNPIGLRLGINRNWASRWFPNYQTAPLNISEDHKIRKFLKKELYYAGVSEIIIERTAKKLRVTVVAARPGIIIGKKGADIEKLKEALKKIVDKEISINIKEVKRPQANAQLAAENVTMQLERRVAFRRAMKKVMQAAMKAGAKGIKIKVSGRLAGAEMARTEWYMEGRVPLHTLRAKIDYGFAEAMTTYGIIGAKVWIFKGEVLQKGIQPEKKEEAPARDKEGRGTRRRGRQ.

A KH type-2 domain is found at 39–107 (IRKFLKKELY…EISINIKEVK (69 aa)). The span at 213–229 (QPEKKEEAPARDKEGRG) shows a compositional bias: basic and acidic residues. A disordered region spans residues 213–236 (QPEKKEEAPARDKEGRGTRRRGRQ).

Belongs to the universal ribosomal protein uS3 family. Part of the 30S ribosomal subunit. Forms a tight complex with proteins S10 and S14.

Functionally, binds the lower part of the 30S subunit head. Binds mRNA in the 70S ribosome, positioning it for translation. The polypeptide is Small ribosomal subunit protein uS3 (Wolinella succinogenes (strain ATCC 29543 / DSM 1740 / CCUG 13145 / JCM 31913 / LMG 7466 / NCTC 11488 / FDC 602W) (Vibrio succinogenes)).